We begin with the raw amino-acid sequence, 271 residues long: Coiled-coil domain-containing protein ORF29 (271 aa).

The segment at 1–39 (MNEKTESEIFEEQNSLYKPIKQEKKTPSTPESEDKNDQS) is disordered. Positions 20-37 (IKQEKKTPSTPESEDKND) are enriched in basic and acidic residues. The stretch at 208–228 (RATQTQEILLNSLRKNLQMLE) forms a coiled coil.

This chain is Coiled-coil domain-containing protein ORF29, found in Helicobacter pylori (strain 35A).